The primary structure comprises 299 residues: Oxygen-dependent coproporphyrinogen-III oxidase (299 aa).

S92 lines the substrate pocket. 2 residues coordinate a divalent metal cation: H96 and H106. The Proton donor role is filled by H106. Substrate is bound at residue 108-110; that stretch reads NVR. 2 residues coordinate a divalent metal cation: H145 and H175. An important for dimerization region spans residues 239-274; sequence YVEFNLVYDRGTLFGLQSGGRAESILMSLPPQVRWE. 257–259 lines the substrate pocket; that stretch reads GGR.

Belongs to the aerobic coproporphyrinogen-III oxidase family. Homodimer. The cofactor is a divalent metal cation.

It is found in the cytoplasm. It catalyses the reaction coproporphyrinogen III + O2 + 2 H(+) = protoporphyrinogen IX + 2 CO2 + 2 H2O. Its pathway is porphyrin-containing compound metabolism; protoporphyrin-IX biosynthesis; protoporphyrinogen-IX from coproporphyrinogen-III (O2 route): step 1/1. Functionally, involved in the heme biosynthesis. Catalyzes the aerobic oxidative decarboxylation of propionate groups of rings A and B of coproporphyrinogen-III to yield the vinyl groups in protoporphyrinogen-IX. The chain is Oxygen-dependent coproporphyrinogen-III oxidase from Xanthomonas campestris pv. campestris (strain B100).